A 332-amino-acid chain; its full sequence is Biotin synthase (332 aa).

Residues 46-275 form the Radical SAM core domain; the sequence is YYGKKVKLNM…SKEIRISGGR (230 aa). 3 residues coordinate [4Fe-4S] cluster: C64, C68, and C71. [2Fe-2S] cluster-binding residues include C108, C140, C200, and R270.

This sequence belongs to the radical SAM superfamily. Biotin synthase family. As to quaternary structure, homodimer. [4Fe-4S] cluster serves as cofactor. The cofactor is [2Fe-2S] cluster.

It catalyses the reaction (4R,5S)-dethiobiotin + (sulfur carrier)-SH + 2 reduced [2Fe-2S]-[ferredoxin] + 2 S-adenosyl-L-methionine = (sulfur carrier)-H + biotin + 2 5'-deoxyadenosine + 2 L-methionine + 2 oxidized [2Fe-2S]-[ferredoxin]. It functions in the pathway cofactor biosynthesis; biotin biosynthesis; biotin from 7,8-diaminononanoate: step 2/2. In terms of biological role, catalyzes the conversion of dethiobiotin (DTB) to biotin by the insertion of a sulfur atom into dethiobiotin via a radical-based mechanism. This Lysinibacillus sphaericus (Bacillus sphaericus) protein is Biotin synthase.